We begin with the raw amino-acid sequence, 402 residues long: Sex hormone-binding globulin (402 aa).

The N-terminal stretch at 1–29 (MESRGPLATSRLLLLLLLLLLRHTRQGWA) is a signal peptide. Threonine 36 carries O-linked (GalNAc...) threonine glycosylation. 2 Laminin G-like domains span residues 45–217 (VHLS…LRSC) and 224–390 (GIFL…THSC). 2 disulfides stabilise this stretch: cysteine 193–cysteine 217 and cysteine 362–cysteine 390. Asparagine 380 and asparagine 396 each carry an N-linked (GlcNAc...) asparagine glycan.

As to quaternary structure, homodimer. Post-translationally, variant Asn-356 contains one N-linked (GlcNAc...) at position 356. As to expression, isoform 1 and isoform 2 are present in liver and testis.

Its subcellular location is the secreted. Functionally, functions as an androgen transport protein, but may also be involved in receptor mediated processes. Each dimer binds one molecule of steroid. Specific for 5-alpha-dihydrotestosterone, testosterone, and 17-beta-estradiol. Regulates the plasma metabolic clearance rate of steroid hormones by controlling their plasma concentration. This is Sex hormone-binding globulin from Homo sapiens (Human).